The following is a 471-amino-acid chain: UDP-N-acetylmuramate--L-alanine ligase (471 aa).

Residue 114–120 (GTHGKTT) participates in ATP binding.

It belongs to the MurCDEF family.

Its subcellular location is the cytoplasm. The enzyme catalyses UDP-N-acetyl-alpha-D-muramate + L-alanine + ATP = UDP-N-acetyl-alpha-D-muramoyl-L-alanine + ADP + phosphate + H(+). Its pathway is cell wall biogenesis; peptidoglycan biosynthesis. In terms of biological role, cell wall formation. The chain is UDP-N-acetylmuramate--L-alanine ligase from Chlorobaculum parvum (strain DSM 263 / NCIMB 8327) (Chlorobium vibrioforme subsp. thiosulfatophilum).